The sequence spans 310 residues: Vomeronasal type-1 receptor 53 (310 aa).

At 1–20 the chain is on the extracellular side; that stretch reads MNKANLLHTDINLKITLFSE. Residues 21–41 traverse the membrane as a helical segment; that stretch reads VSVGISANSILIFAHLCMLLG. Residues 42–50 are Cytoplasmic-facing; it reads ENRPKPIDL. A helical membrane pass occupies residues 51 to 71; that stretch reads YIAFFSLTQLMLLITMGLIAV. The Extracellular segment spans residues 72-93; sequence DMFMPWGRWDSTTCQSLIYLHR. A disulfide bridge links C85 with C172. The chain crosses the membrane as a helical span at residues 94–114; sequence LLRGLTLSATCLLNVLWTITL. Over 115–134 the chain is Cytoplasmic; that stretch reads SPRSSCLTKFKHKSLQHISC. The helical transmembrane segment at 135 to 155 threads the bilayer; the sequence is AFLFLCVLYMSFNSHLFISII. Over 156–183 the chain is Extracellular; that stretch reads AYPNLTLENFMYVTQSCSLIPLSYFRKS. N159 carries an N-linked (GlcNAc...) asparagine glycan. The helical transmembrane segment at 184–204 threads the bilayer; it reads MFSIPMAIREALLIGLMALSG. At 205-238 the chain is on the cytoplasmic side; that stretch reads GYMVAHLWRHKKQAQHLHRTSLSSKASPEQRATR. The helical transmembrane segment at 239–259 threads the bilayer; it reads TIMLLMSFFVVLYILDLVIFH. Residues 260 to 268 are Extracellular-facing; that stretch reads SRMKFKDGS. The helical transmembrane segment at 269 to 289 threads the bilayer; it reads ILYGVQIIVSHSYATVSPFVF. Residues 290 to 310 lie on the Cytoplasmic side of the membrane; that stretch reads ICTEKRITNFLRSMCGRIVNI.

The protein belongs to the G-protein coupled receptor 1 family.

It is found in the cell membrane. In terms of biological role, putative pheromone receptor implicated in the regulation of social and reproductive behavior. This chain is Vomeronasal type-1 receptor 53 (Vmn1r53), found in Mus musculus (Mouse).